We begin with the raw amino-acid sequence, 633 residues long: Guanylate-binding protein 6 (633 aa).

Residues 1–310 form a GTPase domain (Globular) region; sequence MESGPKMLAP…EAVNSGAVPC (310 aa). Residues 35–277 enclose the GB1/RHD3-type G domain; sequence SQPVVVVAIV…FSSYIFTHAR (243 aa). Residues 45–52, 67–69, and 97–101 contribute to the GTP site; these read GLYRTGKS, LGS, and DTEGL.

This sequence belongs to the TRAFAC class dynamin-like GTPase superfamily. GB1/RHD3 GTPase family. GB1 subfamily.

The protein localises to the cytoplasmic vesicle. The catalysed reaction is GTP + H2O = GDP + phosphate + H(+). Interferon (IFN)-inducible GTPase that plays important roles in innate immunity against a diverse range of bacterial, viral and protozoan pathogens, such as bacterial pathogens Listeria monocytogenes and Mycobacterium bovis BCG as well as the protozoan pathogen Toxoplasma gondii. Confers protection to several pathogens, including the bacterial pathogens Listeria monocytogenes and Mycobacterium bovis BCG as well as the protozoan pathogen Toxoplasma gondii. This is Guanylate-binding protein 6 (GBP6) from Pongo abelii (Sumatran orangutan).